We begin with the raw amino-acid sequence, 141 residues long: Transcription antitermination protein NusB (141 aa).

It belongs to the NusB family.

Its function is as follows. Involved in transcription antitermination. Required for transcription of ribosomal RNA (rRNA) genes. Binds specifically to the boxA antiterminator sequence of the ribosomal RNA (rrn) operons. The sequence is that of Transcription antitermination protein NusB from Fervidobacterium nodosum (strain ATCC 35602 / DSM 5306 / Rt17-B1).